The sequence spans 346 residues: fMet-Leu-Phe receptor (346 aa).

N-linked (GlcNAc...) asparagine glycans are attached at residues Asn1 and Asn7. Residues Asn1 to Ile24 are Extracellular-facing. A helical transmembrane segment spans residues Ile25–Val47. Topologically, residues Ala48–Thr58 are cytoplasmic. Residues Ile59 to Val80 form a helical membrane-spanning segment. Residues Val81 to Phe97 are Extracellular-facing. Cys95 and Cys173 form a disulfide bridge. A helical transmembrane segment spans residues Ile98 to Leu118. The Cytoplasmic portion of the chain corresponds to Asp119 to Ser137. Residues Leu138 to Ile159 form a helical membrane-spanning segment. The Extracellular segment spans residues Arg160–Arg202. The chain crosses the membrane as a helical span at residues Phe203–Thr223. Residues Lys224 to Val239 are Cytoplasmic-facing. A helical membrane pass occupies residues Leu240–Val263. The Extracellular portion of the chain corresponds to Arg264–Ala282. A helical transmembrane segment spans residues Thr283 to Gly302. Residues Gln303 to Ala346 lie on the Cytoplasmic side of the membrane. The tract at residues Leu321–Ala346 is disordered. Positions Asp324–Pro338 are enriched in polar residues.

Belongs to the G-protein coupled receptor 1 family. Phosphorylated; which is necessary for desensitization.

The protein resides in the cell membrane. Functionally, high affinity receptor for N-formyl-methionyl peptides (fMLP), which are powerful neutrophil chemotactic factors. Binding of fMLP to the receptor stimulates intracellular calcium mobilization and superoxide anion release. This response is mediated via a G-protein that activates a phosphatidylinositol-calcium second messenger system. Receptor for TAFA4, mediates its effects on chemoattracting macrophages, promoting phagocytosis and increasing ROS release. Receptor for cathepsin CTSG, leading to increased phagocyte chemotaxis. The polypeptide is fMet-Leu-Phe receptor (FPR1) (Macaca mulatta (Rhesus macaque)).